The primary structure comprises 149 residues: MRAVVQRVSRAEVRVDGAVTGAVGRGLLVLLGVARDDGAQDARLLADKLAALRIFEDAAGKMNLAVAEVGGAVLVVSQFTLLGDARKGNRPGFSDAAPPEAANALYEAVCGMLREKGLRVETGVFRADMQVELVNDGPVTILLDSRRLF.

A Gly-cisPro motif, important for rejection of L-amino acids motif is present at residues 137–138; that stretch reads GP.

It belongs to the DTD family. In terms of assembly, homodimer.

The protein resides in the cytoplasm. The catalysed reaction is glycyl-tRNA(Ala) + H2O = tRNA(Ala) + glycine + H(+). The enzyme catalyses a D-aminoacyl-tRNA + H2O = a tRNA + a D-alpha-amino acid + H(+). An aminoacyl-tRNA editing enzyme that deacylates mischarged D-aminoacyl-tRNAs. Also deacylates mischarged glycyl-tRNA(Ala), protecting cells against glycine mischarging by AlaRS. Acts via tRNA-based rather than protein-based catalysis; rejects L-amino acids rather than detecting D-amino acids in the active site. By recycling D-aminoacyl-tRNA to D-amino acids and free tRNA molecules, this enzyme counteracts the toxicity associated with the formation of D-aminoacyl-tRNA entities in vivo and helps enforce protein L-homochirality. The chain is D-aminoacyl-tRNA deacylase from Anaeromyxobacter dehalogenans (strain 2CP-C).